The sequence spans 56 residues: Small ribosomal subunit protein uS14 (56 aa).

Residues Cys-21, Cys-24, Cys-39, and Cys-42 each contribute to the Zn(2+) site.

This sequence belongs to the universal ribosomal protein uS14 family. Zinc-binding uS14 subfamily. Part of the 30S ribosomal subunit. Requires Zn(2+) as cofactor.

Binds 16S rRNA, required for the assembly of 30S particles. The polypeptide is Small ribosomal subunit protein uS14 (Methanospirillum hungatei JF-1 (strain ATCC 27890 / DSM 864 / NBRC 100397 / JF-1)).